A 312-amino-acid polypeptide reads, in one-letter code: tRNA dimethylallyltransferase (312 aa).

11–18 (GLTATGKT) is a binding site for ATP. 13–18 (TATGKT) lines the substrate pocket. Residues 36 to 39 (DSMC) form an interaction with substrate tRNA region.

Belongs to the IPP transferase family. As to quaternary structure, monomer. Mg(2+) serves as cofactor.

It carries out the reaction adenosine(37) in tRNA + dimethylallyl diphosphate = N(6)-dimethylallyladenosine(37) in tRNA + diphosphate. Functionally, catalyzes the transfer of a dimethylallyl group onto the adenine at position 37 in tRNAs that read codons beginning with uridine, leading to the formation of N6-(dimethylallyl)adenosine (i(6)A). This chain is tRNA dimethylallyltransferase, found in Caldicellulosiruptor saccharolyticus (strain ATCC 43494 / DSM 8903 / Tp8T 6331).